The chain runs to 732 residues: MSSLTNQDAINSIDIDVGGTFTDFVLTLDGERHIAKCPTTPHDLSIGFLNAVEAGGDKVGLSVEELLPRIDIIRYSTTVALNRLLQRQGPRIGLLTTEGHEDAILIGRGAQWTDGQRVAERRNIAVQNKPLPLIERDLILGVRERIDSSGSVVRPLDEEDVRTKLRMLMDRGARAIVVSLLWSFMNPAHEKRVREIIREEYKEYHIGFVPVVMSHSVVSKIGEYERTMTAVLDAYLQRSMQNDIGATWDKLRAKGYHGAFLMIHNSGGSADIFKTPASRTFNGGPVAGLMGSAYFANKLGYKNVVAGDVGGTSFDVALVVESSVRNYTFRPVIDKWMVNVTMMQTISVGSGGGSIAKVDRSGTRLEVGPRSAGSMPGPVCYDLGGTEPTVTDADVVLGYINPDTYYGGRMPLNKAKAEKAIREKIAQPLGIETIEAAALIRYIVDENMASAIKREVHMRGYHPEDFVLFAFGGAGPTHMAGLKGDIPKAVVFPAAPVFCAMGSSIMDIVHMYEQSRRMVFMEPGTEKFVVDYEHFNQTVDTMIERARQELRSEGLEVDDASFGLELDMLYGGQVNLKRMSSPLLHIRTAEDALKVYQAFETEFSEAFSPLVVNKPGGVFLDNFVLRVTVPTWKPPIPEYPLQGTDPSAAFLGKRKAYWPETKHWADTPTYQFELLQAGNVIDGPAIVEAELTTIVVPPRQRLSIDTHGLAILEAIDPAPPTKRVSAAAAAIV.

It belongs to the HyuA family. In terms of assembly, acetophenone carboxylase consists of five subunits; a heterooctameric subcomplex of two alpha (Apc1), two beta (Apc2), two gamma (Apc3) and two delta (Apc4) subunits assembles with the epsilon (Apc5) subunit in an unknown stoichiometry. It depends on Mg(2+) as a cofactor. Mn(2+) serves as cofactor.

The protein resides in the cytoplasm. The enzyme catalyses acetophenone + hydrogencarbonate + 2 ATP + H2O = 3-oxo-3-phenylpropanoate + 2 ADP + 2 phosphate + 2 H(+). With respect to regulation, inhibited by zinc ions, carbamoylphosphate and beta,gamma-imido-ATP. Functionally, catalyzes the carboxylation of acetophenone to form 3-oxo-3-phenylpropanoate (benzoylacetate) in the anaerobic catabolism of ethylbenzene. Also carboxylates propiophenone at the same rate and 4-acetyl-pyridine at lower rates. This Aromatoleum aromaticum (strain DSM 19018 / LMG 30748 / EbN1) (Azoarcus sp. (strain EbN1)) protein is Acetophenone carboxylase gamma subunit (apc3).